We begin with the raw amino-acid sequence, 410 residues long: LL-diaminopimelate aminotransferase (410 aa).

Residues Tyr-15 and Gly-42 each contribute to the substrate site. Pyridoxal 5'-phosphate is bound by residues Tyr-72, Ala-108 to Lys-109, Tyr-132, Asn-187, Tyr-218, and Ser-246 to Ser-248. Substrate contacts are provided by Lys-109, Tyr-132, and Asn-187. N6-(pyridoxal phosphate)lysine is present on Lys-249. Residues Arg-257 and Asn-292 each contribute to the pyridoxal 5'-phosphate site. Substrate is bound by residues Asn-292 and Arg-388.

This sequence belongs to the class-I pyridoxal-phosphate-dependent aminotransferase family. LL-diaminopimelate aminotransferase subfamily. Homodimer. It depends on pyridoxal 5'-phosphate as a cofactor.

It catalyses the reaction (2S,6S)-2,6-diaminopimelate + 2-oxoglutarate = (S)-2,3,4,5-tetrahydrodipicolinate + L-glutamate + H2O + H(+). Its pathway is amino-acid biosynthesis; L-lysine biosynthesis via DAP pathway; LL-2,6-diaminopimelate from (S)-tetrahydrodipicolinate (aminotransferase route): step 1/1. Involved in the synthesis of meso-diaminopimelate (m-DAP or DL-DAP), required for both lysine and peptidoglycan biosynthesis. Catalyzes the direct conversion of tetrahydrodipicolinate to LL-diaminopimelate. This chain is LL-diaminopimelate aminotransferase, found in Picosynechococcus sp. (strain ATCC 27264 / PCC 7002 / PR-6) (Agmenellum quadruplicatum).